The chain runs to 904 residues: DNA mismatch repair protein MutS (904 aa).

Position 655-662 (655-662) interacts with ATP; it reads GPNMGGKS.

Belongs to the DNA mismatch repair MutS family.

This protein is involved in the repair of mismatches in DNA. It is possible that it carries out the mismatch recognition step. This protein has a weak ATPase activity. The protein is DNA mismatch repair protein MutS of Agrobacterium fabrum (strain C58 / ATCC 33970) (Agrobacterium tumefaciens (strain C58)).